The following is a 205-amino-acid chain: CASP-like protein 0U1 (205 aa).

The Cytoplasmic portion of the chain corresponds to Met1–Lys38. Residues Phe39 to Ala57 traverse the membrane as a helical segment. Topologically, residues Lys58–Gly89 are extracellular. A helical membrane pass occupies residues Val90 to Ile110. Residues Arg111 to Ala124 are Cytoplasmic-facing. The helical transmembrane segment at Leu125–Val145 threads the bilayer. Residues Leu146–Ser159 lie on the Extracellular side of the membrane. The helical transmembrane segment at Leu160–Ala180 threads the bilayer. The Cytoplasmic portion of the chain corresponds to Trp181–Gly205.

It belongs to the Casparian strip membrane proteins (CASP) family. In terms of assembly, homodimer and heterodimers.

It is found in the cell membrane. The polypeptide is CASP-like protein 0U1 (Ostreococcus lucimarinus (strain CCE9901)).